The sequence spans 295 residues: Giardin subunit alpha-1 (295 aa).

4 Annexin repeats span residues 2–71 (PKVT…MDLF), 73–143 (DRHE…MEKW), 153–223 (GSPE…AHFA), and 226–293 (GMHR…TLWR).

This sequence belongs to the annexin family. Giardin subunit alpha subfamily.

It is found in the cytoplasm. The protein localises to the cytoskeleton. Its function is as follows. Giardins are involved in parasite attachment to the intestinal mucosa and in the cytoskeletal disassembly and reassembly that marks the transition from infectious trophozoite to transmissible cyst. They may interact with other cytoskeletal proteins such as microtubules in the microribbons or crossbridges, to maintain the integrity of the ventral disk. The protein is Giardin subunit alpha-1 of Giardia intestinalis (Giardia lamblia).